Reading from the N-terminus, the 93-residue chain is Small ribosomal subunit protein uS19 (93 aa).

Belongs to the universal ribosomal protein uS19 family.

Functionally, protein S19 forms a complex with S13 that binds strongly to the 16S ribosomal RNA. This chain is Small ribosomal subunit protein uS19, found in Mycolicibacterium smegmatis (strain ATCC 700084 / mc(2)155) (Mycobacterium smegmatis).